Reading from the N-terminus, the 2038-residue chain is Non-reducing polyketide synthase ZEA1 (2038 aa).

The segment at 9-246 (LLFGDQTDSW…NELNIHALQH (238 aa)) is N-terminal acylcarrier protein transacylase domain (SAT). A Ketosynthase family 3 (KS3) domain is found at 364–794 (PGRIAIVGMA…GGNACILLED (431 aa)). Active-site for beta-ketoacyl synthase activity residues include cysteine 537, histidine 672, and histidine 711. The interval 888–1172 (VFVFTGQGSH…VCSSFVRATL (285 aa)) is malonyl-CoA:ACP transacylase (MAT) domain. The active-site For acyl/malonyl transferase activity is the serine 979. Residues 1221-1572 (SLLNLPTYAW…HFHEVENAVL (352 aa)) are product template (PT) domain. Positions 1254-1405 (HETFKANIST…GQLIQARWDK (152 aa)) are N-terminal hotdog fold. The PKS/mFAS DH domain occupies 1254–1573 (HETFKANIST…FHEVENAVLD (320 aa)). The tract at residues 1425 to 1573 (ISHRLQPQIL…FHEVENAVLD (149 aa)) is C-terminal hotdog fold. The Carrier domain maps to 1616-1693 (QSDAHVLDSI…DLRRVFAPKS (78 aa)). Serine 1653 is modified (O-(pantetheine 4'-phosphoryl)serine). The segment at 1700–1738 (NDLSRPSLVDDTSQALQSSGSESFDQPPTSVTSTSDSGS) is disordered. Over residues 1709–1737 (DDTSQALQSSGSESFDQPPTSVTSTSDSG) the composition is skewed to polar residues. Residues 1778-1882 (TGTIATYIHL…PRSKTVEDKN (105 aa)) are thioesterase (TE) domain. Histidine 2021 serves as the catalytic For thioesterase activity.

It functions in the pathway mycotoxin biosynthesis. In terms of biological role, non-reducing polyketide synthase; part of the gene cluster that mediates the biosynthesis of zearalenone (ZEA), a nonsteroid estrogen that is a contaminant of cereal grains and causes estrogenic disorders in humans and animals. The ZEA backbone is synthesized from a single acetyl-CoA molecule and eight malonyl-CoA molecules. The reducing polyketide synthase ZEA2 is proposed to synthesize a reduced hexaketide intermediate by using different combinations of its reductive domains during each round of condensation. The hexaketide thioester is then transacylated to the non-reducing polyketide synthase ZEA1 and is further condensed with three malonyl-CoAs without reductive tailoring to yield a mixed reduced/unreduced nonaketide. ZEA1 must be able to interact with ZEA2 to facilitate starter-unit acyltransfer and initiate polyketide biosynthesis. ZEA1 also mediates the required C2-C7 cyclization to form the resorcylate core and catalyzes the formation of the macrolactone. ZEA1 exhibits broad starter-unit specificities toward fatty acyl-CoAs ranging in sizes between C6 and C16 and displays the highest activity toward decanoyl-CoA. ZEB1 is then responsible for the chemical conversion of beta-zearalenonol (beta-ZOL) to ZEA in the biosynthetic pathway. The protein is Non-reducing polyketide synthase ZEA1 of Gibberella zeae (strain ATCC MYA-4620 / CBS 123657 / FGSC 9075 / NRRL 31084 / PH-1) (Wheat head blight fungus).